The sequence spans 692 residues: Elongation factor G (692 aa).

Residues aspartate 8–leucine 283 form the tr-type G domain. Residues alanine 17–threonine 24, aspartate 81–histidine 85, and asparagine 135–aspartate 138 contribute to the GTP site.

This sequence belongs to the TRAFAC class translation factor GTPase superfamily. Classic translation factor GTPase family. EF-G/EF-2 subfamily.

The protein resides in the cytoplasm. Its function is as follows. Catalyzes the GTP-dependent ribosomal translocation step during translation elongation. During this step, the ribosome changes from the pre-translocational (PRE) to the post-translocational (POST) state as the newly formed A-site-bound peptidyl-tRNA and P-site-bound deacylated tRNA move to the P and E sites, respectively. Catalyzes the coordinated movement of the two tRNA molecules, the mRNA and conformational changes in the ribosome. The chain is Elongation factor G from Trichlorobacter lovleyi (strain ATCC BAA-1151 / DSM 17278 / SZ) (Geobacter lovleyi).